Reading from the N-terminus, the 341-residue chain is S-adenosylmethionine:tRNA ribosyltransferase-isomerase (341 aa).

The protein belongs to the QueA family. In terms of assembly, monomer.

Its subcellular location is the cytoplasm. It catalyses the reaction 7-aminomethyl-7-carbaguanosine(34) in tRNA + S-adenosyl-L-methionine = epoxyqueuosine(34) in tRNA + adenine + L-methionine + 2 H(+). The protein operates within tRNA modification; tRNA-queuosine biosynthesis. Transfers and isomerizes the ribose moiety from AdoMet to the 7-aminomethyl group of 7-deazaguanine (preQ1-tRNA) to give epoxyqueuosine (oQ-tRNA). The polypeptide is S-adenosylmethionine:tRNA ribosyltransferase-isomerase (Clostridium perfringens (strain ATCC 13124 / DSM 756 / JCM 1290 / NCIMB 6125 / NCTC 8237 / Type A)).